Reading from the N-terminus, the 1249-residue chain is MGHSRRPAGGEKKSRGFGRSKAVADVGDGRQTGGKPQVKKATFESTKKKEIGVSDLTLLSKISNEAINDNLKLRFEHDEIYTYIGHVLVSVNPFRDLGIYTDNVLQSYRGKNRLEVPPHVFAVAESAYYNMKSYKDNQCVIISGESGAGKTEAAKRIMQYIASVSGGTDSSIQHTKDMVLATNPLLESFGNAKTLRNNNSSRFGKYLELEFNTNGEPVGANITNYLLEKSRVVGQITNERNFHIFYQFTKAAPQKYRDLFGIQQPQSYLYTSRSKCFDVPGVDDSAEFRDTLNAMNVIGMTEGEQDEVFRMLAAILWIGNVQFAEDDSGNAVITDQSVVDYVAYLLEVDAAQVNKAFTIRVMETARGGRRGSVYEVPLNTVQALAVRDALAKAIYFNLFDWIVQRVNASLTARGEVANSIGILDIYGFEIFEKNSFEQLCINYVNEKLQQIFIQLTLKAEQDEYAREQIQWTPIKYFDNKVVCSLIEDKRPPGVFAALNDACATAHADSSAADNTFVGRLNFLSQNPNFENRQGQFIIKHYAGDVSYAVAGMTDKNKDQLLKDLLNLVGTSGNQFVHTLFPEQVNQDDKRRPPTASDKIKASANDLVATLMKAQPSYIRTIKPNDNKAPREYNVGNVLHQIKYLGLQENVRIRRAGFAYRQTFDKFVERFYLLSPKTSYAGDYTWTGDAESGARQILKDTSIPAEEYQMGITKVFVKTPETLFALEAMRDRYWHNMAIRIQRAWRNYLRYRTECAIRIQRFWRRTTGGLEFIKLRDQGHQLLNGRKERRRMSLLGSRRFLGDYIGVGNKGGPGEMVRNGAGISGSEEILFSCRGEVLVSKFGRSSKPAPRILALTNRHVYIIAQNLVNNQLVISSERTIPIGAIKAVGASNLKDDWFSIVVGSPQEPDPLVNCVFKTEFFTHLNNALRGQLNLKIADHIEYNKKPGKLATVKVVKDPAVARDDSYKSGTIHTGPGEPANSVSKPTPRPKQVSARPVTKGKLLRPGGPGGGPSKLAARPTPAAQPLPRATPQPAEPQPAARAVPQPVAAVAASHTRTGSTASVRAPPPPPPAAAPAPKKPTAKVLYDFNSQQSNELSIKAGEIVQIVSKEGNGWWLCMNMTTSAQGWTPEAYLEEQVAPTPKPAPPPPPAAPRSTPAPATNGAAAAAKAKPAPPAPPAKRPNMAARKAVPTPPPAPRDSAVSMNSHDSSGGSGRGTPNSMSNASLAGGLAEALRARQHAMQGKQDDDDDW.

Positions 1–42 (MGHSRRPAGGEKKSRGFGRSKAVADVGDGRQTGGKPQVKKAT) are disordered. In terms of domain architecture, Myosin motor spans 51-730 (IGVSDLTLLS…TLFALEAMRD (680 aa)). An ATP-binding site is contributed by 144–151 (GESGAGKT). S372 is modified (phosphoserine). Residues 419–501 (SIGILDIYGF…PGVFAALNDA (83 aa)) form an actin-binding region. IQ domains follow at residues 734-754 (HNMA…RTEC) and 755-780 (AIRI…QGHQ). Residues 788–978 (RRRMSLLGSR…TIHTGPGEPA (191 aa)) enclose the TH1 domain. Disordered regions lie at residues 962 to 1079 (DDSY…PKKP) and 1126 to 1249 (WTPE…DDDW). The span at 1021-1035 (AAQPLPRATPQPAEP) shows a compositional bias: pro residues. A compositionally biased stretch (low complexity) spans 1036 to 1051 (QPAARAVPQPVAAVAA). Pro residues-rich tracts occupy residues 1064–1077 (APPP…PAPK) and 1139–1150 (TPKPAPPPPPAA). Positions 1076-1137 (PKKPTAKVLY…PEAYLEEQVA (62 aa)) constitute an SH3 domain. The span at 1151–1169 (PRSTPAPATNGAAAAAKAK) shows a compositional bias: low complexity. Polar residues predominate over residues 1200-1221 (VSMNSHDSSGGSGRGTPNSMSN). A compositionally biased stretch (low complexity) spans 1222–1231 (ASLAGGLAEA).

Belongs to the TRAFAC class myosin-kinesin ATPase superfamily. Myosin family. Phosphorylation of the TEDS site (Ser-372) is required for the polarization of the actin cytoskeleton. Phosphorylation probably activates the myosin-I ATPase activity.

The protein resides in the cytoplasm. Its subcellular location is the cytoskeleton. It localises to the actin patch. Functionally, type-I myosin implicated in the organization of the actin cytoskeleton. Required for proper actin cytoskeleton polarization. At the cell cortex, assembles in patch-like structures together with proteins from the actin-polymerizing machinery and promotes actin assembly. Functions as actin nucleation-promoting factor (NPF) for the Arp2/3 complex. Plays an important role in polarized growth, spore germination, hyphal morphogenesis, and septal wall formation. In Aspergillus fumigatus (strain ATCC MYA-4609 / CBS 101355 / FGSC A1100 / Af293) (Neosartorya fumigata), this protein is Myosin-1 (myoA).